The sequence spans 1556 residues: Lysine-specific demethylase 5C (1556 aa).

The 42-residue stretch at 14-55 (CPVFEPSWAEFRDPLGYIAKIRPIAEKSGICKIRPPADWQPP) folds into the JmjN domain. Residues 79 to 169 (TRVKLNYLDQ…IVYPYEMYQS (91 aa)) form the ARID domain. Residues 197-207 (LRQSVQPSKFN) show a composition bias toward polar residues. The segment at 197-227 (LRQSVQPSKFNSYGRRAKRLQPDPEPTEEDI) is disordered. Residues Lys-205, Lys-229, Lys-244, and Lys-274 each participate in a glycyl lysine isopeptide (Lys-Gly) (interchain with G-Cter in SUMO2) cross-link. The disordered stretch occupies residues 257 to 303 (LRKKDKEGPECPPTVVVKEESGGDVKVESTSPKTFLESKEELSHSPE). Basic and acidic residues predominate over residues 273–283 (VKEESGGDVKV). At Ser-287 the chain carries Phosphoserine. Lys-295 is covalently cross-linked (Glycyl lysine isopeptide (Lys-Gly) (interchain with G-Cter in SUMO2)). Phosphoserine occurs at positions 301 and 317. The PHD-type 1 zinc finger occupies 324–374 (SYVCRMCSRGDEDDKLLLCDGCDDNYHIFCLLPPLPEIPKGVWRCPKCVMA). In terms of domain architecture, JmjC spans 468-634 (EYATSGWNLN…AGRQCIEHYR (167 aa)). His-514, Asp-517, and His-602 together coordinate Fe cation. Phosphoserine occurs at positions 893 and 897. Lys-1127 participates in a covalent cross-link: Glycyl lysine isopeptide (Lys-Gly) (interchain with G-Cter in SUMO2). A PHD-type 2 zinc finger spans residues 1185–1250 (TSVCVCGQVP…KFLCPLCMRS (66 aa)). 2 disordered regions span residues 1315–1362 (LQAE…SPEK) and 1441–1556 (ERHG…QQQL). Residues 1335-1345 (PLREGSGKDMP) show a composition bias toward basic and acidic residues. Residue Ser-1359 is modified to Phosphoserine. The segment covering 1445-1460 (SRARGRALERRRRRKV) has biased composition (basic residues). A compositionally biased stretch (basic and acidic residues) spans 1461–1478 (DRGGEGDDPAREELEPKR). Acidic residues predominate over residues 1485 to 1500 (EAEEAQEEEELEEETG). 2 stretches are compositionally biased toward polar residues: residues 1513-1522 (SPSTQENQNG) and 1530-1540 (SGPSAPFSTLS). A compositionally biased stretch (low complexity) spans 1541-1556 (PQLHVPCPQQPPQQQL).

The protein belongs to the JARID1 histone demethylase family. In terms of assembly, part of two distinct complexes, one containing E2F6, and the other containing REST. Interacts with ZMYND8. The cofactor is Fe(2+).

The protein localises to the nucleus. It carries out the reaction N(6),N(6),N(6)-trimethyl-L-lysyl(4)-[histone H3] + 3 2-oxoglutarate + 3 O2 = L-lysyl(4)-[histone H3] + 3 formaldehyde + 3 succinate + 3 CO2. Its function is as follows. Histone demethylase that specifically demethylates 'Lys-4' of histone H3, thereby playing a central role in histone code. Does not demethylate histone H3 'Lys-9', H3 'Lys-27', H3 'Lys-36', H3 'Lys-79' or H4 'Lys-20'. Demethylates trimethylated and dimethylated but not monomethylated H3 'Lys-4'. Participates in transcriptional repression of neuronal genes by recruiting histone deacetylases and REST at neuron-restrictive silencer elements. Represses the CLOCK-BMAL1 heterodimer-mediated transcriptional activation of the core clock component PER2. The chain is Lysine-specific demethylase 5C (KDM5C) from Canis lupus familiaris (Dog).